Here is a 188-residue protein sequence, read N- to C-terminus: Probable nicotinate-nucleotide adenylyltransferase (188 aa).

The protein belongs to the NadD family.

The enzyme catalyses nicotinate beta-D-ribonucleotide + ATP + H(+) = deamido-NAD(+) + diphosphate. It participates in cofactor biosynthesis; NAD(+) biosynthesis; deamido-NAD(+) from nicotinate D-ribonucleotide: step 1/1. Its function is as follows. Catalyzes the reversible adenylation of nicotinate mononucleotide (NaMN) to nicotinic acid adenine dinucleotide (NaAD). This chain is Probable nicotinate-nucleotide adenylyltransferase, found in Listeria welshimeri serovar 6b (strain ATCC 35897 / DSM 20650 / CCUG 15529 / CIP 8149 / NCTC 11857 / SLCC 5334 / V8).